Consider the following 111-residue polypeptide: uncharacterized protein (111 aa).

3 helical membrane-spanning segments follow: residues 4–23 (LHQV…LGHV), 39–61 (IYLG…VLSA), and 65–84 (SGIQ…EAVL).

It is found in the cell membrane. This is an uncharacterized protein from Bacillus subtilis (strain 168).